The following is a 124-amino-acid chain: UPF0102 protein HCH_05895 (124 aa).

It belongs to the UPF0102 family.

The polypeptide is UPF0102 protein HCH_05895 (Hahella chejuensis (strain KCTC 2396)).